A 367-amino-acid chain; its full sequence is Alanine racemase (367 aa).

Residue Lys-40 is the Proton acceptor; specific for D-alanine of the active site. At Lys-40 the chain carries N6-(pyridoxal phosphate)lysine. Residue Arg-136 participates in substrate binding. Catalysis depends on Tyr-263, which acts as the Proton acceptor; specific for L-alanine. Met-310 lines the substrate pocket.

It belongs to the alanine racemase family. It depends on pyridoxal 5'-phosphate as a cofactor.

It carries out the reaction L-alanine = D-alanine. Its pathway is amino-acid biosynthesis; D-alanine biosynthesis; D-alanine from L-alanine: step 1/1. Functionally, catalyzes the interconversion of L-alanine and D-alanine. May also act on other amino acids. The polypeptide is Alanine racemase (alr) (Streptococcus pneumoniae (strain Taiwan19F-14)).